We begin with the raw amino-acid sequence, 190 residues long: uncharacterized protein (190 aa).

This is an uncharacterized protein from Homo sapiens (Human).